The following is a 97-amino-acid chain: Antitoxin YafN (97 aa).

It belongs to the phD/YefM antitoxin family. Probably forms a complex with the mRNA interferase YafO which inhibits the mRNA interferase activity.

Functionally, antitoxin component of a type II toxin-antitoxin (TA) system. Functions as an mRNA interferase antitoxin; overexpression prevents YafO-mediated cessation of cell growth and inhibition of cell proliferation. The polypeptide is Antitoxin YafN (yafN) (Escherichia coli (strain K12)).